We begin with the raw amino-acid sequence, 121 residues long: Putative inactive aspartokinase 3 HI_1632 (121 aa).

Belongs to the aspartokinase family.

This chain is Putative inactive aspartokinase 3 HI_1632, found in Haemophilus influenzae (strain ATCC 51907 / DSM 11121 / KW20 / Rd).